A 428-amino-acid chain; its full sequence is Maltoporin (428 aa).

A signal peptide spans Met-1–Ala-24.

This sequence belongs to the porin LamB (TC 1.B.3) family. As to quaternary structure, homotrimer formed of three 18-stranded antiparallel beta-barrels, containing three independent channels.

Its subcellular location is the cell outer membrane. The catalysed reaction is beta-maltose(in) = beta-maltose(out). Functionally, involved in the transport of maltose and maltodextrins. In Photorhabdus laumondii subsp. laumondii (strain DSM 15139 / CIP 105565 / TT01) (Photorhabdus luminescens subsp. laumondii), this protein is Maltoporin.